The primary structure comprises 629 residues: Keratin, type II cytoskeletal 3 (629 aa).

The tract at residues 1–182 is head; it reads MNRQVCKTSG…DPQIGQVRAQ (182 aa). Residues serine 13 and serine 62 each carry the phosphoserine modification. The tract at residues 183 to 218 is coil 1A; that stretch reads EREQIKTLNNKFASFIDKVRFLEQQNKVLETKWELL. Residues 183–498 form the IF rod domain; sequence EREQIKTLNN…KLLEGEESRM (316 aa). The tract at residues 219–239 is linker 1; it reads QRQGPNSVTGTNNLEPLFENR. The coil 1B stretch occupies residues 240–331; the sequence is INYLRSYLDS…TLYDAELSQM (92 aa). Lysine 281 carries the post-translational modification N6,N6-dimethyllysine. Positions 332–355 are linker 12; it reads QSHVSDMSVVLSMDNNRSLDLDSI. Residue serine 349 is modified to Phosphoserine. The interval 356–494 is coil 2; that stretch reads IAEVRAQYED…ATYRKLLEGE (139 aa). The interval 495-629 is tail; the sequence is ESRMSGECQS…FSQSSQRYSR (135 aa). Residues 603–629 are disordered; that stretch reads SGGGFSSGSSSRGSSVKFSQSSQRYSR. The segment covering 618–629 has biased composition (polar residues); the sequence is VKFSQSSQRYSR.

The protein belongs to the intermediate filament family. As to quaternary structure, heterotetramer of two type I and two type II keratins. Keratin-3 associates with keratin-12. In terms of tissue distribution, cornea specific. Expressed in the basal cells of corneal epithelium and stroma. Also expressed in esophageal epithelium.

This Oryctolagus cuniculus (Rabbit) protein is Keratin, type II cytoskeletal 3 (KRT3).